The primary structure comprises 414 residues: Carboxynorspermidine synthase (414 aa).

It belongs to the saccharopine dehydrogenase family. Carboxynorspermidine synthase subfamily.

The catalysed reaction is carboxynorspermidine + NADP(+) + H2O = L-aspartate 4-semialdehyde + propane-1,3-diamine + NADPH + H(+). It catalyses the reaction carboxyspermidine + NADP(+) + H2O = L-aspartate 4-semialdehyde + putrescine + NADPH + H(+). Its function is as follows. Involved in norspermidine biosynthesis. Catalyzes the synthesis of carboxynorspermidine from L-aspartate 4-semialdehyde and 1,3-diaminopropane. Is also active with putrescine as a substrate. Essential for biofilm formation. In Vibrio cholerae serotype O1 (strain ATCC 39315 / El Tor Inaba N16961), this protein is Carboxynorspermidine synthase.